The primary structure comprises 279 residues: HTH-type transcriptional regulator BhcR (279 aa).

The span at 1–13 shows a compositional bias: basic residues; it reads MSVQIRKRGRPRG. A disordered region spans residues 1–21; the sequence is MSVQIRKRGRPRGRAGGLGAE. An HTH iclR-type domain is found at 26 to 87; that stretch reads IRALDRALDI…SQTQAWHVGP (62 aa). The segment at residues 47-66 is a DNA-binding region (H-T-H motif); sequence LTEIAQRLDMAPSTVHRVLV. Positions 102-271 constitute an IclR-ED domain; that stretch reads LVERARPLLR…ARELSFGMAP (170 aa).

Its function is as follows. Transcriptional regulator of the bhc gene cluster involved in glycolate and glyoxylate assimilation via the beta-hydroxyaspartate cycle (BHAC). Glyoxylate negatively affects the interaction of BhcR with the promoter region of the bhc gene cluster. The protein is HTH-type transcriptional regulator BhcR of Paracoccus denitrificans (strain Pd 1222).